The following is a 292-amino-acid chain: Nucleotide-binding protein azo0399 (292 aa).

Residue 8-15 (GLSGSGKS) participates in ATP binding. 57 to 60 (DMRS) serves as a coordination point for GTP.

The protein belongs to the RapZ-like family.

Functionally, displays ATPase and GTPase activities. The polypeptide is Nucleotide-binding protein azo0399 (Azoarcus sp. (strain BH72)).